The following is an 85-amino-acid chain: uncharacterized protein (85 aa).

A signal peptide spans 1 to 19 (MKTIFTVGAVVLATCLLSG). Cys20 carries the N-palmitoyl cysteine lipid modification. The S-diacylglycerol cysteine moiety is linked to residue Cys20.

It is found in the cell outer membrane. This is an uncharacterized protein from Escherichia coli (strain K12).